The primary structure comprises 44 residues: Small, acid-soluble spore protein P (44 aa).

Residues M1–M44 are disordered. The segment covering N8 to Q18 has biased composition (basic and acidic residues). Over residues H26–M44 the composition is skewed to basic residues.

It belongs to the SspP family.

The protein resides in the spore core. This is Small, acid-soluble spore protein P from Bacillus cereus (strain ATCC 10987 / NRS 248).